The sequence spans 206 residues: ATP synthase subunit b (206 aa).

Residues 14 to 34 (VMMPAAVCAAVIGLSALGFAA) traverse the membrane as a helical segment.

The protein belongs to the ATPase B chain family. As to quaternary structure, F-type ATPases have 2 components, F(1) - the catalytic core - and F(0) - the membrane proton channel. F(1) has five subunits: alpha(3), beta(3), gamma(1), delta(1), epsilon(1). F(0) has three main subunits: a(1), b(2) and c(10-14). The alpha and beta chains form an alternating ring which encloses part of the gamma chain. F(1) is attached to F(0) by a central stalk formed by the gamma and epsilon chains, while a peripheral stalk is formed by the delta and b chains.

The protein localises to the cell inner membrane. F(1)F(0) ATP synthase produces ATP from ADP in the presence of a proton or sodium gradient. F-type ATPases consist of two structural domains, F(1) containing the extramembraneous catalytic core and F(0) containing the membrane proton channel, linked together by a central stalk and a peripheral stalk. During catalysis, ATP synthesis in the catalytic domain of F(1) is coupled via a rotary mechanism of the central stalk subunits to proton translocation. In terms of biological role, component of the F(0) channel, it forms part of the peripheral stalk, linking F(1) to F(0). The protein is ATP synthase subunit b of Geobacter metallireducens (strain ATCC 53774 / DSM 7210 / GS-15).